The primary structure comprises 455 residues: Peroxisomal membrane protein PEX3 (455 aa).

Residues 113-125 (TVLSDDFSTSQEG) are compositionally biased toward polar residues. Residues 113–135 (TVLSDDFSTSQEGAISEDTNKPP) are disordered. The chain crosses the membrane as a helical span at residues 155–171 (FLTLIYCESLLIVFLHL).

Belongs to the peroxin-3 family. As to quaternary structure, component of the peroxisomal docking complex, composed of at least PEX3, PEX13, PEX14 and PEX17. Component of the peroxisomal translocation complex, composed of at least PEX3, PEX2, PEX10 and PEX12. Interacts with PEX19. Interacts with the pexophagy receptor ATG30.

It is found in the peroxisome membrane. Functionally, peroxisomal membrane protein required for peroxisome biosynthesis. Shared component of both the peroxisomal docking complex and the peroxisomal translocation complex. The two types of peroxisomal matrix targeting signals, PTS1 and PTS2, are first recognized in the cytosol by their receptors PEX5 and PEX7, respectively, which then carry the cargo to the peroxisomal membrane. The peroxisomal targeting signal (PTS) receptor-cargo complexes interact with peroxisomal membrane protein (PMP) components of the docking complex. They have then additional downstream interactions with the translocation complex, leading to the transport of fully folded and oligomerized cargo into the peroxisome matrix. PEX3 acts as an anchoring site for PEX19 on the peroxisomal membrane and thus plays a crucial role in the assembly of the peroxisomal translocation complex. Is also essential for the interaction between the two complexes. Finally. PEX3 activates selective autophagy of peroxisomes (pexophagy) via interaction with the pexophagy receptor ATG30. This Komagataella pastoris (Yeast) protein is Peroxisomal membrane protein PEX3.